A 383-amino-acid polypeptide reads, in one-letter code: Na(+)/H(+) antiporter NhaA (383 aa).

11 helical membrane-spanning segments follow: residues 10 to 30, 56 to 76, 91 to 111, 121 to 141, 150 to 170, 174 to 194, 206 to 226, 254 to 274, 289 to 308, 327 to 347, and 355 to 375; these read LIGGLILFSAALLAIVVNNSP, LMHWINDGLMAIYFLYIGLEI, IITPAIAAFAGLAMPSLIYLS, GWAIPSATDIAFTLGILALLG, LLVITIAIFDDIAAIAIIAIF, SLSLLSLSLGTLFILAMIICN, VVLGFFAWFCTIKSGVHATLA, PWIIYFILPVFAFANAGISFS, IIWGLFVGKQLGIFSILAVF, GISLLCGIGFTMSLFIGVLAF, and AIKIGVVVGSVLSGFFGYIVL.

This sequence belongs to the NhaA Na(+)/H(+) (TC 2.A.33) antiporter family.

The protein resides in the cell inner membrane. The catalysed reaction is Na(+)(in) + 2 H(+)(out) = Na(+)(out) + 2 H(+)(in). Na(+)/H(+) antiporter that extrudes sodium in exchange for external protons. This chain is Na(+)/H(+) antiporter NhaA, found in Francisella tularensis subsp. tularensis (strain SCHU S4 / Schu 4).